The chain runs to 440 residues: 23S rRNA (uracil(1939)-C(5))-methyltransferase RlmD (440 aa).

Positions 1 to 21 are disordered; that stretch reads MRRRTSPRRTTTSKPQPIGPI. Residues 15–73 form the TRAM domain; sequence PQPIGPIQTFEVDGLTHEAKGVARLQGKVTFIEGALPGETVEAQVNKAGRRFDEAVLVN. 4 residues coordinate [4Fe-4S] cluster: cysteine 86, cysteine 92, cysteine 95, and cysteine 169. S-adenosyl-L-methionine-binding residues include glutamine 273, phenylalanine 302, asparagine 307, glutamate 323, aspartate 350, and aspartate 370. Cysteine 396 acts as the Nucleophile in catalysis.

The protein belongs to the class I-like SAM-binding methyltransferase superfamily. RNA M5U methyltransferase family. RlmD subfamily.

The catalysed reaction is uridine(1939) in 23S rRNA + S-adenosyl-L-methionine = 5-methyluridine(1939) in 23S rRNA + S-adenosyl-L-homocysteine + H(+). In terms of biological role, catalyzes the formation of 5-methyl-uridine at position 1939 (m5U1939) in 23S rRNA. The protein is 23S rRNA (uracil(1939)-C(5))-methyltransferase RlmD of Marinomonas sp. (strain MWYL1).